We begin with the raw amino-acid sequence, 468 residues long: 3-isopropylmalate dehydratase large subunit (468 aa).

[4Fe-4S] cluster is bound by residues Cys347, Cys408, and Cys411.

Belongs to the aconitase/IPM isomerase family. LeuC type 1 subfamily. Heterodimer of LeuC and LeuD. [4Fe-4S] cluster serves as cofactor.

It catalyses the reaction (2R,3S)-3-isopropylmalate = (2S)-2-isopropylmalate. The protein operates within amino-acid biosynthesis; L-leucine biosynthesis; L-leucine from 3-methyl-2-oxobutanoate: step 2/4. Catalyzes the isomerization between 2-isopropylmalate and 3-isopropylmalate, via the formation of 2-isopropylmaleate. The polypeptide is 3-isopropylmalate dehydratase large subunit (Janthinobacterium sp. (strain Marseille) (Minibacterium massiliensis)).